The chain runs to 315 residues: tRNA dimethylallyltransferase (315 aa).

An ATP-binding site is contributed by 13-20 (GPTASGKT). Position 15-20 (15-20 (TASGKT)) interacts with substrate. Interaction with substrate tRNA stretches follow at residues 38-41 (DSAL), 162-166 (QRIQR), and 245-250 (RCVGYR).

The protein belongs to the IPP transferase family. Monomer. The cofactor is Mg(2+).

The enzyme catalyses adenosine(37) in tRNA + dimethylallyl diphosphate = N(6)-dimethylallyladenosine(37) in tRNA + diphosphate. Functionally, catalyzes the transfer of a dimethylallyl group onto the adenine at position 37 in tRNAs that read codons beginning with uridine, leading to the formation of N6-(dimethylallyl)adenosine (i(6)A). This chain is tRNA dimethylallyltransferase, found in Methylobacillus flagellatus (strain ATCC 51484 / DSM 6875 / VKM B-1610 / KT).